We begin with the raw amino-acid sequence, 275 residues long: Formamidopyrimidine-DNA glycosylase (275 aa).

The Schiff-base intermediate with DNA role is filled by Pro-2. The active-site Proton donor is Glu-3. Lys-59 functions as the Proton donor; for beta-elimination activity in the catalytic mechanism. The DNA site is built by His-93, Arg-112, and Arg-153. An FPG-type zinc finger spans residues 238-272 (NVYDRVGKPCPRCQTAIERIVVAQRSTFFCPLCQV). Arg-262 acts as the Proton donor; for delta-elimination activity in catalysis.

Belongs to the FPG family. Monomer. Zn(2+) serves as cofactor.

The enzyme catalyses Hydrolysis of DNA containing ring-opened 7-methylguanine residues, releasing 2,6-diamino-4-hydroxy-5-(N-methyl)formamidopyrimidine.. It catalyses the reaction 2'-deoxyribonucleotide-(2'-deoxyribose 5'-phosphate)-2'-deoxyribonucleotide-DNA = a 3'-end 2'-deoxyribonucleotide-(2,3-dehydro-2,3-deoxyribose 5'-phosphate)-DNA + a 5'-end 5'-phospho-2'-deoxyribonucleoside-DNA + H(+). Functionally, involved in base excision repair of DNA damaged by oxidation or by mutagenic agents. Acts as a DNA glycosylase that recognizes and removes damaged bases. Has a preference for oxidized purines, such as 7,8-dihydro-8-oxoguanine (8-oxoG). Has AP (apurinic/apyrimidinic) lyase activity and introduces nicks in the DNA strand. Cleaves the DNA backbone by beta-delta elimination to generate a single-strand break at the site of the removed base with both 3'- and 5'-phosphates. The polypeptide is Formamidopyrimidine-DNA glycosylase (Chloroflexus aggregans (strain MD-66 / DSM 9485)).